The chain runs to 211 residues: Protein-methionine-sulfoxide reductase heme-binding subunit MsrQ (211 aa).

4 helical membrane-spanning segments follow: residues 10-30, 82-102, 116-136, and 153-173; these read WLKVCLHLAGLLPFLWLVWAI, LWCFAWATLHLTSYALLELGV, PYLTLGIISWVILLALAFTST, and FVYLVAILAPIHYLWSVKIIS.

It belongs to the MsrQ family. In terms of assembly, heterodimer of a catalytic subunit (MsrP) and a heme-binding subunit (MsrQ). It depends on FMN as a cofactor. The cofactor is heme b.

The protein localises to the cell inner membrane. Part of the MsrPQ system that repairs oxidized periplasmic proteins containing methionine sulfoxide residues (Met-O), using respiratory chain electrons. Thus protects these proteins from oxidative-stress damage caused by reactive species of oxygen and chlorine generated by the host defense mechanisms. MsrPQ is essential for the maintenance of envelope integrity under bleach stress, rescuing a wide series of structurally unrelated periplasmic proteins from methionine oxidation, including the primary periplasmic chaperone SurA and the lipoprotein Pal. MsrQ provides electrons for reduction to the reductase catalytic subunit MsrP, using the quinone pool of the respiratory chain. This Shigella dysenteriae serotype 1 (strain Sd197) protein is Protein-methionine-sulfoxide reductase heme-binding subunit MsrQ.